Consider the following 332-residue polypeptide: Mitoferrin-1 (332 aa).

Solcar repeat units follow at residues A31–S119, N129–H213, and Y220–F314. 6 helical membrane-spanning segments follow: residues L33 to Y52, G94 to Y113, H131 to N150, S188 to Y207, P222 to T241, and G289 to Y308.

The protein belongs to the mitochondrial carrier (TC 2.A.29) family. In terms of tissue distribution, highly expressed in hematopoietic organs, Expressed in the intermediate cell mass (ICM), a tissue equivalent to the mammalian extraembryonic yolk-sac blood islands. Colocalizes with gata1.

The protein localises to the mitochondrion inner membrane. It carries out the reaction Fe(2+)(in) = Fe(2+)(out). Mitochondrial iron transporter that specifically mediates iron uptake in developing erythroid cells, thereby playing an essential role in heme biosynthesis. The polypeptide is Mitoferrin-1 (slc25a37) (Danio rerio (Zebrafish)).